The primary structure comprises 426 residues: Enolase (426 aa).

Q162 is a (2R)-2-phosphoglycerate binding site. E204 functions as the Proton donor in the catalytic mechanism. 3 residues coordinate Mg(2+): D241, E288, and D315. 4 residues coordinate (2R)-2-phosphoglycerate: K340, R369, S370, and K391. The Proton acceptor role is filled by K340.

It belongs to the enolase family. Mg(2+) is required as a cofactor.

The protein resides in the cytoplasm. It is found in the secreted. It localises to the cell surface. The enzyme catalyses (2R)-2-phosphoglycerate = phosphoenolpyruvate + H2O. It participates in carbohydrate degradation; glycolysis; pyruvate from D-glyceraldehyde 3-phosphate: step 4/5. Catalyzes the reversible conversion of 2-phosphoglycerate (2-PG) into phosphoenolpyruvate (PEP). It is essential for the degradation of carbohydrates via glycolysis. This chain is Enolase, found in Bacteroides thetaiotaomicron (strain ATCC 29148 / DSM 2079 / JCM 5827 / CCUG 10774 / NCTC 10582 / VPI-5482 / E50).